Reading from the N-terminus, the 732-residue chain is Sesterbrasiliatriene synthase PbSS (732 aa).

The terpene cyclase stretch occupies residues M1–T342. 2 residues coordinate Mg(2+): D105 and D109. Substrate is bound by residues D105, D109, R193–E196, F242–F246, and R334–Y335. The DDXXD 1 signature appears at D105–D109. Residues D238–F246 carry the NSE/DTE motif. A prenyltransferase region spans residues T343 to L732. 2 disordered regions span residues K371–S390 and A398–N420. Positions N411 to N420 are enriched in basic and acidic residues. Residues K453, R456, and H485 each coordinate isopentenyl diphosphate. Positions 492 and 496 each coordinate Mg(2+). The DDXXD 2 signature appears at D492–D496. A dimethylallyl diphosphate-binding site is contributed by R501. An isopentenyl diphosphate-binding site is contributed by R502. Residues K579, T580, Q615, N622, K632, and K642 each contribute to the dimethylallyl diphosphate site.

This sequence in the N-terminal section; belongs to the terpene synthase family. It in the C-terminal section; belongs to the FPP/GGPP synthase family. Hexamer. Mg(2+) serves as cofactor.

It carries out the reaction isopentenyl diphosphate + (2E,6E)-farnesyl diphosphate = (2E,6E,10E)-geranylgeranyl diphosphate + diphosphate. The enzyme catalyses isopentenyl diphosphate + (2E,6E,10E)-geranylgeranyl diphosphate = (2E,6E,10E,14E)-geranylfarnesyl diphosphate + diphosphate. Its pathway is secondary metabolite biosynthesis; terpenoid biosynthesis. In terms of biological role, bifunctional sesterterpene synthase that possesses both prenyl transferase and terpene cyclase activity, converting isopentenyl diphosphate and dimethylallyl diphosphate into geranylfarnesyl diphosphate (GFPP) and further converting GFPP into sesterbrasiliatriene. This chain is Sesterbrasiliatriene synthase PbSS (PbSS), found in Penicillium brasilianum.